Here is a 430-residue protein sequence, read N- to C-terminus: Aspartate aminotransferase, mitochondrial (430 aa).

The N-terminal 29 residues, 1–29 (MALLHSGRVLSGVASAFHPGLAAAASARA), are a transit peptide targeting the mitochondrion. The residue at position 48 (Thr48) is a Phosphothreonine. Lys59 is modified (N6-acetyllysine). Residue Gly65 coordinates substrate. Lys73 is subject to N6-acetyllysine; alternate. Lys73 carries the N6-succinyllysine; alternate modification. Position 82 is an N6-acetyllysine (Lys82). Position 90 is an N6-acetyllysine; alternate (Lys90). Position 90 is an N6-succinyllysine; alternate (Lys90). Tyr96 is modified (3'-nitrotyrosine; alternate). Residue Tyr96 is modified to Phosphotyrosine; alternate. N6-acetyllysine; alternate occurs at positions 107, 122, and 159. Lys107, Lys122, and Lys159 each carry N6-succinyllysine; alternate. Trp162 lines the substrate pocket. An N6-acetyllysine; alternate modification is found at Lys185. At Lys185 the chain carries N6-succinyllysine; alternate. Asn215 provides a ligand contact to substrate. Lys227 is subject to N6-succinyllysine. N6-acetyllysine is present on Lys234. Residues Lys279 and Lys296 each carry the N6-acetyllysine; alternate modification. At Lys279 the chain carries N6-(pyridoxal phosphate)lysine; alternate. Lys296 is modified (N6-succinyllysine; alternate). Lys302 bears the N6-acetyllysine mark. At Lys309 the chain carries N6-acetyllysine; alternate. An N6-succinyllysine; alternate modification is found at Lys309. Position 313 is an asymmetric dimethylarginine (Arg313). Lys345 bears the N6-acetyllysine mark. Lys363 is modified (N6-acetyllysine; alternate). Lys363 carries the post-translational modification N6-succinyllysine; alternate. N6-acetyllysine is present on residues Lys364 and Lys387. Residues Lys396 and Lys404 each carry the N6-acetyllysine; alternate modification. 2 positions are modified to N6-succinyllysine; alternate: Lys396 and Lys404. Position 407 (Arg407) interacts with substrate.

Belongs to the class-I pyridoxal-phosphate-dependent aminotransferase family. In terms of assembly, homodimer. Requires pyridoxal 5'-phosphate as cofactor.

The protein resides in the mitochondrion matrix. The protein localises to the cell membrane. The catalysed reaction is L-aspartate + 2-oxoglutarate = oxaloacetate + L-glutamate. It carries out the reaction L-kynurenine + 2-oxoglutarate = kynurenate + L-glutamate + H2O. Its function is as follows. Catalyzes the irreversible transamination of the L-tryptophan metabolite L-kynurenine to form kynurenic acid (KA). As a member of the malate-aspartate shuttle, it has a key role in the intracellular NAD(H) redox balance. Is important for metabolite exchange between mitochondria and cytosol, and for amino acid metabolism. Facilitates cellular uptake of long-chain free fatty acids. This chain is Aspartate aminotransferase, mitochondrial (GOT2), found in Sus scrofa (Pig).